Consider the following 79-residue polypeptide: Acyl carrier protein (79 aa).

In terms of domain architecture, Carrier spans 2–77 (ENIEQRVKKI…QAIDYVTAHL (76 aa)). At Ser37 the chain carries O-(pantetheine 4'-phosphoryl)serine.

It belongs to the acyl carrier protein (ACP) family. 4'-phosphopantetheine is transferred from CoA to a specific serine of apo-ACP by AcpS. This modification is essential for activity because fatty acids are bound in thioester linkage to the sulfhydryl of the prosthetic group.

It localises to the cytoplasm. It participates in lipid metabolism; fatty acid biosynthesis. Functionally, carrier of the growing fatty acid chain in fatty acid biosynthesis. The protein is Acyl carrier protein of Laribacter hongkongensis (strain HLHK9).